The primary structure comprises 466 residues: Keratin, type II cytoskeletal 7 (466 aa).

The residue at position 2 (S2) is an N-acetylserine. Phosphoserine is present on residues S2 and S7. Positions S2–E91 are head. A glycan (O-linked (GlcNAc) serine) is linked at S12. R20 is subject to Dimethylated arginine; alternate. Residue R20 is modified to Omega-N-methylarginine; alternate. A phosphoserine mark is found at S54, S72, and S84. Residues E91 to L127 form a coil 1A region. Residues E92–L404 form the IF rod domain. Position 98 is a phosphothreonine (T98). Positions Q128–Q145 are linker 1. K131 is covalently cross-linked (Glycyl lysine isopeptide (Lys-Gly) (interchain with G-Cter in SUMO2)). The segment at I146–L237 is coil 1B. K180 carries the N6-acetyllysine modification. Residues Q238 to I261 are linker 12. S255 carries the phosphoserine modification. The segment at I262–E400 is coil 2. Residues K266 and K287 each participate in a glycyl lysine isopeptide (Lys-Gly) (interchain with G-Cter in SUMO2) cross-link. At T290 the chain carries Phosphothreonine. Glycyl lysine isopeptide (Lys-Gly) (interchain with G-Cter in SUMO2) cross-links involve residues K297 and K332. The interval E401 to K466 is tail.

It belongs to the intermediate filament family. As to quaternary structure, heterotetramer of two type I and two type II keratins. Interacts with eukaryotic translation initiator factor 3 (eIF3) subunit EIF3S10. Interacts with GPER1. In terms of processing, arg-20 is dimethylated, probably to asymmetric dimethylarginine.

Its function is as follows. Blocks interferon-dependent interphase and stimulates DNA synthesis in cells. The sequence is that of Keratin, type II cytoskeletal 7 from Bos taurus (Bovine).